The primary structure comprises 216 residues: MEPAFWQKRWADNQIGFHQAQVNPYLQKYWPRLQLAPASRVLVPLCGKSLDLAWLAGQGYRVLGVELSRQAVEGFFREHGLDADVLQHGAFEVWRSGEIELWCGDFFTLQAEDIADCVGLYDRAALIALPPQMRAAYMRLLSAWLPAGCRGLLVTLDYDQSLLGGPPFSVGDKEVLQGFAGWQMDELEVVELIQESPKFLQAGACSLLERVYRVKR.

Positions 10, 45, 66, and 123 each coordinate S-adenosyl-L-methionine.

It belongs to the class I-like SAM-binding methyltransferase superfamily. TPMT family.

Its subcellular location is the cytoplasm. It catalyses the reaction S-adenosyl-L-methionine + a thiopurine = S-adenosyl-L-homocysteine + a thiopurine S-methylether.. This Pseudomonas putida (strain GB-1) protein is Thiopurine S-methyltransferase.